The sequence spans 90 residues: MNADGPVVNVHVLFFAKSRELANTPRSTVDVPTEITANELLDHLVSKFGLISIRDNLILAHNESYIDNLSDRILFKEGDELAVIPPLSGG.

Residue glycine 90 is modified to 1-thioglycine; alternate. Glycyl adenylate; alternate is present on glycine 90.

The protein belongs to the MoaD family. MOCS2A subfamily. In terms of assembly, heterotetramer; composed of 2 small (Mocs2A) and 2 large (Mocs2B) subunits. C-terminal thiocarboxylation occurs in 2 steps, it is first acyl-adenylated (-COAMP) via the hesA/moeB/thiF part of MOCS3, then thiocarboxylated (-COSH) via the rhodanese domain of MOCS3.

It localises to the cytoplasm. It participates in cofactor biosynthesis; molybdopterin biosynthesis. Acts as a sulfur carrier required for molybdopterin biosynthesis. Component of the molybdopterin synthase complex that catalyzes the conversion of precursor Z into molybdopterin by mediating the incorporation of 2 sulfur atoms into precursor Z to generate a dithiolene group. In the complex, serves as sulfur donor by being thiocarboxylated (-COSH) at its C-terminus by MOCS3. After interaction with Mocs2B, the sulfur is then transferred to precursor Z to form molybdopterin. The chain is Molybdopterin synthase sulfur carrier subunit from Drosophila sechellia (Fruit fly).